Reading from the N-terminus, the 332-residue chain is rRNA biogenesis protein rrp-36 (332 aa).

4 disordered regions span residues 1–91 (MPAV…ASQL), 104–196 (GALK…SGKS), 243–262 (SMES…ELLS), and 312–332 (KKIA…AEDR). Composition is skewed to acidic residues over residues 27–45 (EPDS…EEEG), 53–77 (DTEE…DSDA), and 117–127 (EDGSDDDEEKE). Basic and acidic residues-rich tracts occupy residues 128-142 (EPNW…MKAK) and 165-183 (RRRD…RDPR). A coiled-coil region spans residues 212 to 274 (DYQEDEMKQL…KKKEKELIKQ (63 aa)). Residues 315 to 332 (AGKEKKALPLARRTAEDR) show a composition bias toward basic and acidic residues.

It belongs to the RRP36 family. Associates with 90S and pre-40S pre-ribosomal particles.

Its subcellular location is the nucleus. The protein resides in the nucleolus. Component of the 90S pre-ribosome involved in the maturation of rRNAs. Required for early cleavages of the pre-RNAs in the 40S ribosomal subunit maturation pathway. In Neurospora crassa (strain ATCC 24698 / 74-OR23-1A / CBS 708.71 / DSM 1257 / FGSC 987), this protein is rRNA biogenesis protein rrp-36 (rrp-36).